We begin with the raw amino-acid sequence, 504 residues long: Pyruvate kinase (504 aa).

Residue Arg53 participates in substrate binding. The K(+) site is built by Asn55, Ser57, Asp88, and Thr89. ATP is bound at residue 55-58; sequence NFSH. ATP contacts are provided by Arg95 and Lys181. Glu246 lines the Mg(2+) pocket. Gly269, Asp270, and Thr302 together coordinate substrate. Asp270 contacts Mg(2+).

Belongs to the pyruvate kinase family. As to quaternary structure, homotetramer. Mg(2+) serves as cofactor. It depends on K(+) as a cofactor.

It catalyses the reaction pyruvate + ATP = phosphoenolpyruvate + ADP + H(+). It participates in carbohydrate degradation; glycolysis; pyruvate from D-glyceraldehyde 3-phosphate: step 5/5. This is Pyruvate kinase (PYK1) from Debaryomyces hansenii (strain ATCC 36239 / CBS 767 / BCRC 21394 / JCM 1990 / NBRC 0083 / IGC 2968) (Yeast).